A 157-amino-acid polypeptide reads, in one-letter code: Endoribonuclease YbeY (157 aa).

H114, H118, and H124 together coordinate Zn(2+).

Belongs to the endoribonuclease YbeY family. The cofactor is Zn(2+).

It localises to the cytoplasm. Single strand-specific metallo-endoribonuclease involved in late-stage 70S ribosome quality control and in maturation of the 3' terminus of the 16S rRNA. The sequence is that of Endoribonuclease YbeY from Serratia proteamaculans (strain 568).